Here is a 69-residue protein sequence, read N- to C-terminus: Putative F-box protein At2g33705 (69 aa).

Residues 14–59 enclose the F-box domain; that stretch reads GVNLEQIPYDLVLEILLKLSAKSIARFRCVSKLWDSTFRSRYFTEL.

The sequence is that of Putative F-box protein At2g33705 from Arabidopsis thaliana (Mouse-ear cress).